Reading from the N-terminus, the 60-residue chain is Large ribosomal subunit protein uL30 (60 aa).

Belongs to the universal ribosomal protein uL30 family. As to quaternary structure, part of the 50S ribosomal subunit.

This Mycobacteroides abscessus (strain ATCC 19977 / DSM 44196 / CCUG 20993 / CIP 104536 / JCM 13569 / NCTC 13031 / TMC 1543 / L948) (Mycobacterium abscessus) protein is Large ribosomal subunit protein uL30.